Reading from the N-terminus, the 350-residue chain is Holliday junction branch migration complex subunit RuvB (350 aa).

The disordered stretch occupies residues 1 to 22 (MDHTASLSPVRPEAQPTDDRER). The segment at 1–185 (MDHTASLSPV…FGIVERFEFY (185 aa)) is large ATPase domain (RuvB-L). Residues L24, R25, G66, K69, T70, T71, 132 to 134 (EDY), R175, Y185, and R222 each bind ATP. T70 contributes to the Mg(2+) binding site. The tract at residues 186–256 (TPEELAAIVQ…IVRAGLAHLK (71 aa)) is small ATPAse domain (RuvB-S). The interval 259–350 (ELGLELHDIQ…PHSPEQGTLL (92 aa)) is head domain (RuvB-H). 2 residues coordinate DNA: R314 and R319.

Belongs to the RuvB family. Homohexamer. Forms an RuvA(8)-RuvB(12)-Holliday junction (HJ) complex. HJ DNA is sandwiched between 2 RuvA tetramers; dsDNA enters through RuvA and exits via RuvB. An RuvB hexamer assembles on each DNA strand where it exits the tetramer. Each RuvB hexamer is contacted by two RuvA subunits (via domain III) on 2 adjacent RuvB subunits; this complex drives branch migration. In the full resolvosome a probable DNA-RuvA(4)-RuvB(12)-RuvC(2) complex forms which resolves the HJ.

The protein resides in the cytoplasm. The catalysed reaction is ATP + H2O = ADP + phosphate + H(+). The RuvA-RuvB-RuvC complex processes Holliday junction (HJ) DNA during genetic recombination and DNA repair, while the RuvA-RuvB complex plays an important role in the rescue of blocked DNA replication forks via replication fork reversal (RFR). RuvA specifically binds to HJ cruciform DNA, conferring on it an open structure. The RuvB hexamer acts as an ATP-dependent pump, pulling dsDNA into and through the RuvAB complex. RuvB forms 2 homohexamers on either side of HJ DNA bound by 1 or 2 RuvA tetramers; 4 subunits per hexamer contact DNA at a time. Coordinated motions by a converter formed by DNA-disengaged RuvB subunits stimulates ATP hydrolysis and nucleotide exchange. Immobilization of the converter enables RuvB to convert the ATP-contained energy into a lever motion, pulling 2 nucleotides of DNA out of the RuvA tetramer per ATP hydrolyzed, thus driving DNA branch migration. The RuvB motors rotate together with the DNA substrate, which together with the progressing nucleotide cycle form the mechanistic basis for DNA recombination by continuous HJ branch migration. Branch migration allows RuvC to scan DNA until it finds its consensus sequence, where it cleaves and resolves cruciform DNA. In Treponema pallidum (strain Nichols), this protein is Holliday junction branch migration complex subunit RuvB.